Here is a 95-residue protein sequence, read N- to C-terminus: MKKYEIMYIIRPNMEEEAQKALVERFANVLTNNGAEIINTKEWGKRRLAYEINDLRDGFYMILNVNSNPEAVKEFDRLAKINEDIIRHIVVKEEE.

This sequence belongs to the bacterial ribosomal protein bS6 family.

In terms of biological role, binds together with bS18 to 16S ribosomal RNA. This Bacillus cytotoxicus (strain DSM 22905 / CIP 110041 / 391-98 / NVH 391-98) protein is Small ribosomal subunit protein bS6.